Here is a 188-residue protein sequence, read N- to C-terminus: Peptide deformylase (188 aa).

The Fe cation site is built by cysteine 109 and histidine 152. Residue glutamate 153 is part of the active site. Histidine 156 serves as a coordination point for Fe cation.

It belongs to the polypeptide deformylase family. Requires Fe(2+) as cofactor.

It carries out the reaction N-terminal N-formyl-L-methionyl-[peptide] + H2O = N-terminal L-methionyl-[peptide] + formate. Removes the formyl group from the N-terminal Met of newly synthesized proteins. Requires at least a dipeptide for an efficient rate of reaction. N-terminal L-methionine is a prerequisite for activity but the enzyme has broad specificity at other positions. The sequence is that of Peptide deformylase from Chloroflexus aurantiacus (strain ATCC 29366 / DSM 635 / J-10-fl).